A 226-amino-acid polypeptide reads, in one-letter code: 8-oxoguanine DNA glycosylase/AP lyase (226 aa).

Catalysis depends on residues Lys-149 and Asp-167.

It belongs to the type-2 OGG1 family.

The enzyme catalyses 2'-deoxyribonucleotide-(2'-deoxyribose 5'-phosphate)-2'-deoxyribonucleotide-DNA = a 3'-end 2'-deoxyribonucleotide-(2,3-dehydro-2,3-deoxyribose 5'-phosphate)-DNA + a 5'-end 5'-phospho-2'-deoxyribonucleoside-DNA + H(+). Functionally, catalyzes the excision of an oxidatively damaged form of guanine (7,8-dihydro-8-oxoguanine = 8-oxoG) from DNA. Also cleaves the DNA backbone at apurinic/apyrimidinic sites (AP sites). The protein is 8-oxoguanine DNA glycosylase/AP lyase of Aquifex aeolicus (strain VF5).